Here is a 163-residue protein sequence, read N- to C-terminus: Deoxyuridine 5'-triphosphate nucleotidohydrolase (163 aa).

Substrate-binding positions include 78 to 80 (RSG), Asn-91, and 95 to 97 (TVD). The segment covering 140–151 (ERESLNETERGD) has biased composition (basic and acidic residues). The segment at 140 to 163 (ERESLNETERGDGGFGHTGVNSQP) is disordered.

This sequence belongs to the dUTPase family. The cofactor is Mg(2+).

It catalyses the reaction dUTP + H2O = dUMP + diphosphate + H(+). Its pathway is pyrimidine metabolism; dUMP biosynthesis; dUMP from dCTP (dUTP route): step 2/2. This enzyme is involved in nucleotide metabolism: it produces dUMP, the immediate precursor of thymidine nucleotides and it decreases the intracellular concentration of dUTP so that uracil cannot be incorporated into DNA. The protein is Deoxyuridine 5'-triphosphate nucleotidohydrolase of Heliobacterium modesticaldum (strain ATCC 51547 / Ice1).